Consider the following 112-residue polypeptide: 2Fe-2S ferredoxin (112 aa).

The 2Fe-2S ferredoxin-type domain maps to isoleucine 5–threonine 107. Residues cysteine 42, cysteine 48, cysteine 51, and cysteine 88 each contribute to the [2Fe-2S] cluster site.

The protein belongs to the adrenodoxin/putidaredoxin family. [2Fe-2S] cluster is required as a cofactor.

Its function is as follows. Ferredoxin are iron-sulfur proteins that transfer electrons in a wide variety of metabolic reactions. This is 2Fe-2S ferredoxin (fdxB) from Rickettsia montanensis.